The chain runs to 377 residues: MINMKFFNRVEEIKEILSILEEEPNLIYFIYGPINSGKTALINEIINNRLDKNKYVVFYIDLREIFISKYDEFEAKLRATKTFGFRLIIEVLFEEYEDDKKPIEIIRSLIKDAPSLCGIPTPKNTLEEILKKKTTKNVFKYITNILMDIKREGKQPIIIIDELQKIGDMKINGFLIYELFNYFVSLTKHKHLCHVFCLSSDSLFIERVYNEAMLKERVDYILVDDFDKETALKFIDFLSEEILNKKLSDEDKELIYSYVGGKPILIINVIGKLKHKNLKDVLNILLMDEISKLKDFLSNLDYIKPKVNIEEEIIEIRKEDIINALKLFKGKYEIEVDKIPKAVYVYLVKKNILFLYPQRGTLKPQSFLVWNAIKRVL.

32–39 (GPINSGKT) contributes to the ATP binding site.

The protein belongs to the archaeal ATPase family.

This is an uncharacterized protein from Methanocaldococcus jannaschii (strain ATCC 43067 / DSM 2661 / JAL-1 / JCM 10045 / NBRC 100440) (Methanococcus jannaschii).